The following is a 186-amino-acid chain: ATP synthase subunit delta (186 aa).

It belongs to the ATPase delta chain family. As to quaternary structure, F-type ATPases have 2 components, F(1) - the catalytic core - and F(0) - the membrane proton channel. F(1) has five subunits: alpha(3), beta(3), gamma(1), delta(1), epsilon(1). CF(0) has four main subunits: a(1), b(1), b'(1) and c(10-14). The alpha and beta chains form an alternating ring which encloses part of the gamma chain. F(1) is attached to F(0) by a central stalk formed by the gamma and epsilon chains, while a peripheral stalk is formed by the delta, b and b' chains.

It localises to the cell inner membrane. Its function is as follows. F(1)F(0) ATP synthase produces ATP from ADP in the presence of a proton or sodium gradient. F-type ATPases consist of two structural domains, F(1) containing the extramembraneous catalytic core and F(0) containing the membrane proton channel, linked together by a central stalk and a peripheral stalk. During catalysis, ATP synthesis in the catalytic domain of F(1) is coupled via a rotary mechanism of the central stalk subunits to proton translocation. In terms of biological role, this protein is part of the stalk that links CF(0) to CF(1). It either transmits conformational changes from CF(0) to CF(1) or is implicated in proton conduction. The protein is ATP synthase subunit delta of Rhodospirillum rubrum (strain ATCC 11170 / ATH 1.1.1 / DSM 467 / LMG 4362 / NCIMB 8255 / S1).